Consider the following 643-residue polypeptide: Transcription elongation factor B polypeptide 3 (643 aa).

A TFIIS N-terminal domain is found at 9 to 82 (DVVRHYQRSI…TKWKAMVAKE (74 aa)). 2 disordered regions span residues 86–289 (IAST…MGAN) and 302–351 (SSKK…SKKP). A compositionally biased stretch (basic and acidic residues) spans 94–106 (HNEEDSGKTKSSD). The span at 114 to 124 (KGGNSSSGEDL) shows a compositional bias: polar residues. Residue serine 120 is modified to Phosphoserine. A compositionally biased stretch (basic residues) spans 127-136 (SKHKSKHAKS). 2 stretches are compositionally biased toward basic and acidic residues: residues 164–198 (HDKS…KDSS) and 207–237 (SKSE…VKDK). The span at 238 to 255 (SSKHKSSSSKSSKRSHSP) shows a compositional bias: basic residues. Residues 302–336 (SSKKSSSNSKSKFVAKPTAAPSSSALSAPTTAGSS) are compositionally biased toward low complexity. Positions 413–571 (AQGISSKTMR…PPRSVQRKQE (159 aa)) are activation domain. Residues 439–448 (SLFDLCTRVL) form an interacting with Elongin BC complex region.

The protein resides in the nucleus. Functionally, SIII, also known as elongin, is a general transcription elongation factor that increases the RNA polymerase II transcription elongation past template-encoded arresting sites. Subunit A is transcriptionally active and its transcription activity is strongly enhanced by binding to the dimeric complex of the SIII regulatory subunits B and C (elongin BC complex). May play an important role in metamorphosis. This chain is Transcription elongation factor B polypeptide 3 (EloA), found in Drosophila melanogaster (Fruit fly).